Here is a 601-residue protein sequence, read N- to C-terminus: Probable N-acetylgalactosaminyltransferase 7 (601 aa).

Topologically, residues 1 to 20 (MIIARKKLQLQRLWRQRGCR) are cytoplasmic. A helical; Signal-anchor for type II membrane protein transmembrane segment spans residues 21–38 (VATYICLGVLVLFGFVYN). Residues 39–601 (SKGNSMSSIK…FVWKEFYQSS (563 aa)) lie on the Lumenal side of the membrane. Residues 61 to 108 (DLTNKELPGGPDPNTIFRGSELGNYEPKEPEIPSNQPGEHGKPVPVTD) form a disordered region. Asparagine 135 carries an N-linked (GlcNAc...) asparagine glycan. 5 disulfides stabilise this stretch: cysteine 146-cysteine 382, cysteine 373-cysteine 452, cysteine 490-cysteine 506, cysteine 529-cysteine 542, and cysteine 568-cysteine 583. The interval 155-265 (LPTVSVVVVF…TNWLPPLLAP (111 aa)) is catalytic subdomain A. Substrate contacts are provided by aspartate 196 and arginine 226. Mn(2+)-binding residues include aspartate 249 and histidine 251. The segment at 328–390 (PFRSPTHAGG…PCSHVGHVYR (63 aa)) is catalytic subdomain B. Tryptophan 359 provides a ligand contact to substrate. Histidine 387 is a binding site for Mn(2+). 2 residues coordinate substrate: arginine 390 and tyrosine 395. The Ricin B-type lectin domain occupies 477 to 595 (DVWGEARNPA…DNERQKFVWK (119 aa)).

This sequence belongs to the glycosyltransferase 2 family. GalNAc-T subfamily. It depends on Mn(2+) as a cofactor.

The protein resides in the golgi apparatus membrane. Its pathway is protein modification; protein glycosylation. In terms of biological role, probable glycopeptide transferase involved in O-linked oligosaccharide biosynthesis. Glycopeptide transferases catalyze the transfer of an N-acetyl-D-galactosamine residue to an already glycosylated peptide. In contrast to other members of the family, it does not act as a peptide transferase that transfers GalNAc onto serine or threonine residue on peptides that have been tested. Some peptide transferase activity is however not excluded, considering that its appropriate peptide substrate may remain unidentified. The sequence is that of Probable N-acetylgalactosaminyltransferase 7 (gly-7) from Caenorhabditis elegans.